Here is a 113-residue protein sequence, read N- to C-terminus: Small ribosomal subunit protein uS17 (113 aa).

The protein belongs to the universal ribosomal protein uS17 family. As to quaternary structure, part of the 30S ribosomal subunit.

Functionally, one of the primary rRNA binding proteins, it binds specifically to the 5'-end of 16S ribosomal RNA. In Pyrococcus abyssi (strain GE5 / Orsay), this protein is Small ribosomal subunit protein uS17.